The chain runs to 153 residues: Ribosome maturation factor RimP (153 aa).

The protein belongs to the RimP family.

It localises to the cytoplasm. Required for maturation of 30S ribosomal subunits. In Clostridium botulinum (strain Loch Maree / Type A3), this protein is Ribosome maturation factor RimP.